The chain runs to 63 residues: Large ribosomal subunit protein bL32 (63 aa).

A disordered region spans residues Met-1–Arg-23. A compositionally biased stretch (basic residues) spans Lys-7–Ala-18.

This sequence belongs to the bacterial ribosomal protein bL32 family.

This chain is Large ribosomal subunit protein bL32, found in Chlorobium phaeobacteroides (strain BS1).